Consider the following 170-residue polypeptide: Cathelicidin antimicrobial peptide (170 aa).

The first 30 residues, 1-30 (MKTQMDGHSLGRWSLVLLLLGLVMPLAIVA), serve as a signal peptide directing secretion. Positions 31–131 (QVLSYKEAVL…DISCDKDNRR (101 aa)) are cleaved as a propeptide — cathelin-like domain (CLD). 2 disulfides stabilise this stretch: Cys86–Cys97 and Cys108–Cys125. The active core stretch occupies residues 150–162 (FKRIVQRIKDFLR).

This sequence belongs to the cathelicidin family. Monomer, homodimer or homotrimer (in vitro). Oligomerizes as tetra- or hexamer in solution (in vitro). Proteolytically cleaved by proteinase PRTN3 into antibacterial peptide LL-37. Proteolytically cleaved by cathepsin CTSG and neutrophil elastase ELANE. Post-translationally, resistant to proteolytic degradation in solution, and when bound to both zwitterionic (mimicking mammalian membranes) and negatively charged membranes (mimicking bacterial membranes). In terms of processing, after secretion onto the skin surface, the CAMP gene product is processed by a serine protease-dependent mechanism into multiple novel antimicrobial peptides distinct from and shorter than cathelicidin LL-37. These peptides show enhanced antimicrobial action, acquiring the ability to kill skin pathogens such as S.aureus, E.coli and C.albicans. These peptides have lost the ability to stimulate CXCL8/IL8 release from keratinocytes. The peptides act synergistically, killing bacteria at lower concentrations when present together, and maintain activity at increased salt condition.

Its subcellular location is the secreted. It is found in the vesicle. Functionally, antimicrobial protein that is an integral component of the innate immune system. Binds to bacterial lipopolysaccharides (LPS). Acts via neutrophil N-formyl peptide receptors to enhance the release of CXCL2. Postsecretory processing generates multiple cathelicidin antimicrobial peptides with various lengths which act as a topical antimicrobial defense in sweat on skin. The unprocessed precursor form, cathelicidin antimicrobial peptide, inhibits the growth of Gram-negative E.coli and E.aerogenes with efficiencies comparable to that of the mature peptide LL-37 (in vitro). Its function is as follows. Antimicrobial peptide that is an integral component of the innate immune system. Binds to bacterial lipopolysaccharides (LPS). Causes membrane permeabilization by forming transmembrane pores (in vitro). Causes lysis of E.coli. Exhibits antimicrobial activity against Gram-negative bacteria such as P.aeruginosa, S.typhimurium, E.aerogenes, E.coli and P.syringae, Gram-positive bacteria such as L.monocytogenes, S.epidermidis, S.pyogenes and S.aureus, as well as vancomycin-resistant enterococci (in vitro). Exhibits antimicrobial activity against methicillin-resistant S.aureus, P.mirabilis, and C.albicans in low-salt media, but not in media containing 100 mM NaCl (in vitro). Forms chiral supramolecular assemblies with quinolone signal (PQS) molecules of P.aeruginosa, which may lead to interference of bacterial quorum signaling and perturbance of bacterial biofilm formation. May form supramolecular fiber-like assemblies on bacterial membranes. Induces cytokine and chemokine producation as well as TNF/TNFA and CSF2/GMCSF production in normal human keratinocytes. Exhibits hemolytic activity against red blood cells. Exhibits antimicrobial activity against E.coli and B.megaterium (in vitro). The chain is Cathelicidin antimicrobial peptide from Pongo pygmaeus (Bornean orangutan).